Reading from the N-terminus, the 130-residue chain is Methylglyoxal synthase (130 aa).

Positions 1 to 130 (MSKPRIALIA…DLARNMQDVC (130 aa)) constitute an MGS-like domain. Substrate contacts are provided by residues His11, Lys15, 37–40 (TGTT), and 57–58 (SG). Catalysis depends on Asp63, which acts as the Proton donor/acceptor. Substrate is bound at residue His90.

Belongs to the methylglyoxal synthase family.

The catalysed reaction is dihydroxyacetone phosphate = methylglyoxal + phosphate. Its function is as follows. Catalyzes the formation of methylglyoxal from dihydroxyacetone phosphate. The polypeptide is Methylglyoxal synthase (Burkholderia vietnamiensis (strain G4 / LMG 22486) (Burkholderia cepacia (strain R1808))).